An 808-amino-acid chain; its full sequence is Probable inorganic carbon transporter subunit DabA (808 aa).

Residues C334, D336, H494, and C509 each contribute to the Zn(2+) site.

It belongs to the inorganic carbon transporter (TC 9.A.2) DabA family. Forms a complex with DabB. It depends on Zn(2+) as a cofactor.

The protein localises to the cell inner membrane. In terms of biological role, part of an energy-coupled inorganic carbon pump. This Allorhizobium ampelinum (strain ATCC BAA-846 / DSM 112012 / S4) (Agrobacterium vitis (strain S4)) protein is Probable inorganic carbon transporter subunit DabA.